Here is a 383-residue protein sequence, read N- to C-terminus: Protein salvador homolog 1 (383 aa).

Phosphoserine is present on residues serine 94 and serine 136. 2 WW domains span residues 199 to 232 (LPLP…HPLE) and 234 to 267 (EGLP…HPCA). Phosphothreonine is present on threonine 210. Residues 321–368 (ILKWELFQLADLDTYQGMLKLLFMKELEQIVKMYEAYRQALLTELENR) enclose the SARAH domain. Residues 344–373 (MKELEQIVKMYEAYRQALLTELENRKQRQQ) adopt a coiled-coil conformation.

In terms of assembly, homodimer. Stabilized through interaction with STK3/MST2 or STK4/MST1. Interacts (via SARAH domain) with isoform 1 of NEK2. Interacts with ESR1 only in the presence of STK3/MST2. Interacts with WTIP and AJUBA. Phosphorylated by STK3/MST2 and STK4/MST1. Phosphorylation is not required for SAV1 stability and may increase the number of protein binding sites on the scaffold molecule. Ubiquitously expressed in adult tissues with highest expression in the pancreas, aorta and interventricular septum and lowest expression in skeletal muscle. Expression was higher in fetal than in the adult heart. Expressed in various cell lines.

It localises to the nucleus. It is found in the cytoplasm. In terms of biological role, regulator of STK3/MST2 and STK4/MST1 in the Hippo signaling pathway which plays a pivotal role in organ size control and tumor suppression by restricting proliferation and promoting apoptosis. The core of this pathway is composed of a kinase cascade wherein STK3/MST2 and STK4/MST1, in complex with its regulatory protein SAV1, phosphorylates and activates LATS1/2 in complex with its regulatory protein MOB1, which in turn phosphorylates and inactivates YAP1 oncoprotein and WWTR1/TAZ. Phosphorylation of YAP1 by LATS1/2 inhibits its translocation into the nucleus to regulate cellular genes important for cell proliferation, cell death, and cell migration. SAV1 is required for STK3/MST2 and STK4/MST1 activation and promotes cell-cycle exit and terminal differentiation in developing epithelial tissues. Plays a role in centrosome disjunction by regulating the localization of NEK2 to centrosomes, and its ability to phosphorylate CROCC and CEP250. In conjunction with STK3/MST2, activates the transcriptional activity of ESR1 through the modulation of its phosphorylation. The protein is Protein salvador homolog 1 of Homo sapiens (Human).